Reading from the N-terminus, the 429-residue chain is Xyloglucan O-acetyltransferase 1 (429 aa).

Residues 1-20 are Cytoplasmic-facing; that stretch reads MGSPFKDHHHHHHPFSLAKK. Residues 21 to 41 traverse the membrane as a helical; Signal-anchor for type II membrane protein segment; that stretch reads LIPWTFYAMIPLVLFRLYFYP. Residues 42–429 lie on the Lumenal side of the membrane; that stretch reads YPLHNITTPI…KWDYESRREE (388 aa). N-linked (GlcNAc...) asparagine glycosylation is found at Asn46 and Asn89. 4 cysteine pairs are disulfide-bonded: Cys72–Cys122, Cys93–Cys158, Cys102–Cys402, and Cys317–Cys398. The GDS motif motif lies at 145–147; the sequence is GDS. Catalysis depends on Ser147, which acts as the Nucleophile. 3 N-linked (GlcNAc...) asparagine glycosylation sites follow: Asn189, Asn263, and Asn351. Asp397 serves as the catalytic Proton donor. The short motif at 397-400 is the DXXH motif element; the sequence is DCVH. His400 functions as the Proton acceptor in the catalytic mechanism.

It belongs to the PC-esterase family. TBL subfamily.

It localises to the golgi apparatus membrane. Xyloglucan acetyltransferase that catalyzes the acetylation of fucosylated Gal residues on xyloglucan side chains. Predominantly catalyze 6-O-monoacetylation of Gal residues in the Fuc-Gal-Xyl trisaccharide side chains of xyloglucan oligomers. The sequence is that of Xyloglucan O-acetyltransferase 1 from Populus trichocarpa (Western balsam poplar).